The primary structure comprises 179 residues: Large ribosomal subunit protein uL5 (179 aa).

Belongs to the universal ribosomal protein uL5 family. As to quaternary structure, part of the 50S ribosomal subunit; part of the 5S rRNA/L5/L18/L25 subcomplex. Contacts the 5S rRNA and the P site tRNA. Forms a bridge to the 30S subunit in the 70S ribosome.

Its function is as follows. This is one of the proteins that bind and probably mediate the attachment of the 5S RNA into the large ribosomal subunit, where it forms part of the central protuberance. In the 70S ribosome it contacts protein S13 of the 30S subunit (bridge B1b), connecting the 2 subunits; this bridge is implicated in subunit movement. Contacts the P site tRNA; the 5S rRNA and some of its associated proteins might help stabilize positioning of ribosome-bound tRNAs. The polypeptide is Large ribosomal subunit protein uL5 (Haemophilus influenzae (strain 86-028NP)).